The following is a 654-amino-acid chain: Pyoverdine export ATP-binding/permease protein PvdT (654 aa).

The region spanning 6–245 is the ABC transporter domain; it reads IELCDIRKAY…QPEQLQANDL (240 aa). 43-50 is a binding site for ATP; the sequence is GASGSGKS. Helical transmembrane passes span 282–302, 529–549, 596–616, and 617–637; these read ALTL…LAVG, LSLM…IGVM, IVIA…VAFA, and LPAI…FGFM.

It belongs to the ABC transporter superfamily. Macrolide exporter (TC 3.A.1.122) family. In terms of assembly, part of the tripartite efflux system PvdRT-OpmQ, which is composed of an inner membrane component with both ATPase and permease domains, PvdT, a periplasmic membrane fusion protein, PvdR, and an outer membrane component, OpmQ.

The protein resides in the cell inner membrane. Part of the tripartite efflux system PvdRT-OpmQ required for the secretion into the extracellular milieu of the siderophore pyoverdine (PVD), which is involved in iron acquisition. This subunit binds PVD and drives its secretion by hydrolyzing ATP. The system is responsible for export of newly synthesized PVD after the final steps of biosynthesis have taken place in the periplasm. It is also responsible for recycling of PVD after internalization of ferri-PVD into the periplasm by the outer-membrane receptor FpvA and release of iron from PVD, thus making PVD available for new cycles of iron uptake. The chain is Pyoverdine export ATP-binding/permease protein PvdT from Pseudomonas entomophila (strain L48).